The sequence spans 303 residues: MDIEKIKREIEELKRQKNAIIVAHNYQIDEIQEIADFVGDSFYLSKVCAERTEDVIVFCGVHFMAESAKILSPQKKVLLPEIDAGCPLADMITEEDVDSLKEKYPDYSIVCYINSPAAVKAKSDVICTSSNAVKIVRNFPNDKIIFLPDKNLGSFVKKQVPEKDIILWEGFCITHYKIKKEDVLKAKEAHPEALLLVHPECRPEVVELADFVGSTKQIIDFATSSKAKEFIIGTEMGILYSLKKRNPDKKFYILHPGMICPNMKKNTLESVRNALLYDRYEINIEENVVEGARKALLKMLELS.

The iminosuccinate site is built by H24 and S41. C86 is a binding site for [4Fe-4S] cluster. Iminosuccinate-binding positions include 112 to 114 (YIN) and S129. C172 serves as a coordination point for [4Fe-4S] cluster. Iminosuccinate-binding positions include 198–200 (HPE) and T215. C260 lines the [4Fe-4S] cluster pocket.

It belongs to the quinolinate synthase family. Type 2 subfamily. [4Fe-4S] cluster serves as cofactor.

It localises to the cytoplasm. It catalyses the reaction iminosuccinate + dihydroxyacetone phosphate = quinolinate + phosphate + 2 H2O + H(+). It functions in the pathway cofactor biosynthesis; NAD(+) biosynthesis; quinolinate from iminoaspartate: step 1/1. Functionally, catalyzes the condensation of iminoaspartate with dihydroxyacetone phosphate to form quinolinate. This chain is Quinolinate synthase, found in Caldicellulosiruptor saccharolyticus (strain ATCC 43494 / DSM 8903 / Tp8T 6331).